A 2226-amino-acid chain; its full sequence is DNA polymerase epsilon catalytic subunit A (2226 aa).

Residues 1240–1265 (RVSKVTSRKRRNGKANNVSDSEEEER) are disordered. Positions 2112, 2115, 2134, and 2137 each coordinate Zn(2+). The CysA-type zinc finger occupies 2112-2137 (CDYCNYIRDIDFCRDEQKNIWNCSNC). [4Fe-4S] cluster is bound by residues C2168, C2171, C2183, and C2185. The short motif at 2168–2185 (CSKCHQIKSDNMSEYCKC) is the CysB motif element.

Belongs to the DNA polymerase type-B family. As to quaternary structure, heterotetramer. Consists of 4 subunits: POL2, DPB2, DPB3 and DPB4. [4Fe-4S] cluster serves as cofactor.

The protein resides in the nucleus. The catalysed reaction is DNA(n) + a 2'-deoxyribonucleoside 5'-triphosphate = DNA(n+1) + diphosphate. In terms of biological role, DNA polymerase II participates in chromosomal DNA replication. The polypeptide is DNA polymerase epsilon catalytic subunit A (POL2) (Debaryomyces hansenii (strain ATCC 36239 / CBS 767 / BCRC 21394 / JCM 1990 / NBRC 0083 / IGC 2968) (Yeast)).